Here is a 726-residue protein sequence, read N- to C-terminus: Catalase-peroxidase (726 aa).

Residues 90–213 (WHAAGTYRIG…LAAVQMGLIY (124 aa)) constitute a cross-link (tryptophyl-tyrosyl-methioninium (Trp-Tyr) (with M-239)). Histidine 91 serves as the catalytic Proton acceptor. A cross-link (tryptophyl-tyrosyl-methioninium (Tyr-Met) (with W-90)) is located at residues 213–239 (YVNPEGPNGNPDPLAAARDIRETFARM). Histidine 254 provides a ligand contact to heme b. Residues 334–359 (AHQWKPKHGAGANTVPDAHDPSKRHA) form a disordered region.

The protein belongs to the peroxidase family. Peroxidase/catalase subfamily. In terms of assembly, homodimer or homotetramer. It depends on heme b as a cofactor. Post-translationally, formation of the three residue Trp-Tyr-Met cross-link is important for the catalase, but not the peroxidase activity of the enzyme.

The catalysed reaction is H2O2 + AH2 = A + 2 H2O. It catalyses the reaction 2 H2O2 = O2 + 2 H2O. Functionally, bifunctional enzyme with both catalase and broad-spectrum peroxidase activity. The polypeptide is Catalase-peroxidase (Bradyrhizobium sp. (strain BTAi1 / ATCC BAA-1182)).